The following is a 125-amino-acid chain: U-scoloptoxin(05)-Er1a (125 aa).

A signal peptide spans 1-20 (MLSLGVSIFLLVFLIPENSG).

The protein belongs to the scoloptoxin-05 family. In terms of processing, contains 4 disulfide bonds. In terms of tissue distribution, expressed by the venom gland.

It is found in the secreted. This Ethmostigmus rubripes (Giant centipede) protein is U-scoloptoxin(05)-Er1a.